The sequence spans 166 residues: Phospholipase A2 myotoxin inhibitor protein (166 aa).

The N-terminal stretch at 1–19 (MRLILLSGLLLLGTFLANG) is a signal peptide. The C-type lectin domain maps to 46-161 (LKYAFLTVHK…CDDNLLVVCE (116 aa)). Cystine bridges form between Cys83/Cys160 and Cys138/Cys152. Asn122 carries N-linked (GlcNAc...) asparagine glycosylation.

This sequence belongs to the alpha-type phospholipase A2 inhibitor family. In terms of assembly, oligomer. Homotrimer; non-covalently linked. Glycosylated. The glycosylation has no role in the association of this PLI and PA2 enzyme. As to expression, expressed by the liver.

The protein localises to the secreted. In terms of biological role, this phospholipase A2 inhibitor binds directly phospholipase A2 in the presence or absence of calcium. Has anti-enzymatic, anti-myotoxic, anti-edema inducing, anti-cytotoxic, anti-bactericidal, and anti-lethal properties against basic and acidic phospholipases A2 from Bothrops venoms. The polypeptide is Phospholipase A2 myotoxin inhibitor protein (Bothrops moojeni (Lance-headed viper)).